Consider the following 85-residue polypeptide: N.vectensis toxin 1 6 (85 aa).

A signal peptide spans 1–20 (MASFKIVIVCLALLVAVACA). Residues 21 to 36 (RRRDMMSDDELDYHYS) constitute a propeptide that is removed on maturation. 3 disulfides stabilise this stretch: Cys-42–Cys-82, Cys-44–Cys-72, and Cys-65–Cys-83.

This sequence belongs to the sea anemone sodium channel inhibitory toxin family. Type II subfamily. As to expression, expressed in ectodermal glands and in clumps outside of the extodermal layer. Is not expressed in nematocytes. In adult female tissues, shows similar expression levels in mesenteries (gametes-producing tissue), tentacles, pharynx and physa.

Its subcellular location is the secreted. Its function is as follows. Binds to site 3 of voltage-gated sodium channels and inhibits the inactivation process. Is highly active on DmNav1/TipE (drosophila) and is only extremely weakly active on rat Nav1.4-beta-1/SCN4A-SCN1B, and on human Nav1.5-beta-1/SCN5A-beta-1. This reveals high specificity for arthropod over mammalian channels. In vivo, when released into the medium, this recombinant toxin induces impaired swimming, paralysis and death of the crustacean A.nauplii within several hours. Also causes paralysis of cherry shrimps immediately after injection at very low doses. Its effect on zebrafish (D.rerio) larvae is also rapid, since it induces tail twitching accompanied by impaired swimming after 20 minutes and complete paralysis within 45 minutes. It has also been observed to cause death of zebrafish larvae within 1 hour. The sequence is that of N.vectensis toxin 1 6 from Nematostella vectensis (Starlet sea anemone).